Reading from the N-terminus, the 156-residue chain is Small ribosomal subunit protein uS7 (156 aa).

Belongs to the universal ribosomal protein uS7 family. In terms of assembly, part of the 30S ribosomal subunit. Contacts proteins S9 and S11.

One of the primary rRNA binding proteins, it binds directly to 16S rRNA where it nucleates assembly of the head domain of the 30S subunit. Is located at the subunit interface close to the decoding center, probably blocks exit of the E-site tRNA. In Acinetobacter baylyi (strain ATCC 33305 / BD413 / ADP1), this protein is Small ribosomal subunit protein uS7.